The following is a 242-amino-acid chain: Ribonuclease PH (242 aa).

Residues R90 and 128–130 (GTR) contribute to the phosphate site.

Belongs to the RNase PH family. Homohexameric ring arranged as a trimer of dimers.

The enzyme catalyses tRNA(n+1) + phosphate = tRNA(n) + a ribonucleoside 5'-diphosphate. Its function is as follows. Phosphorolytic 3'-5' exoribonuclease that plays an important role in tRNA 3'-end maturation. Removes nucleotide residues following the 3'-CCA terminus of tRNAs; can also add nucleotides to the ends of RNA molecules by using nucleoside diphosphates as substrates, but this may not be physiologically important. Probably plays a role in initiation of 16S rRNA degradation (leading to ribosome degradation) during starvation. This chain is Ribonuclease PH, found in Nocardioides sp. (strain ATCC BAA-499 / JS614).